A 130-amino-acid chain; its full sequence is MVRVSVLNDALKSMFNAEKRGKRQVMIRPSSKVVIKFLMVMQKHGYIGEFEYVDDHRSGKIVVELNGRLNKCGVISPRFDVGVKEIEPWTARLLPSRQFGYIVLTTSAGIMDHEEARRKNVGGKVLGFFY.

The protein belongs to the universal ribosomal protein uS8 family.

It is found in the cytoplasm. In Daucus carota (Wild carrot), this protein is Small ribosomal subunit protein uS8 (RPS15A).